Reading from the N-terminus, the 469-residue chain is MTVRVRFAPSPTGMFHVGGARSALQNWIFAKQRGGVFVLRVEDTDAARNKPEWTEGILSALEWIGIARGSYEGPYFQSSYAAEHRTAASRLHEGGRAYYCDCTREAVQARTGSPHSGYDGFCRDRDLGPGAGRALRFRTPDEGATVVVDLIRGEPTFENRLIEDFVIARSDGSPVFLLANVVDDMTMGITHVIRAEEHLPNTPKQQLLWEALGVKPPVWAHVPVVVNEKRQKLSKRRDKVALEAYRDEGYLADAMRNYLMLLGWAPSGDREIVPWPVIEEEFRLEQVNPSSAFFDEKKLRAFNGEYIRALPVAEFVAACQPWLTGTATIAPPPWQPDEFDADTFAAVAPLAQTRIAVLSEIVANVDFLFLDSPLIDEGAWAKAMKEGAGDLLDAAITAFTAIPSWDAESTKSALEAVGAEHGLKLGKAQAPVRVAVTGRRVGLPLFESLEVLGRERTLTRLRAARVRLP.

The 'HIGH' region motif lies at 9 to 19; it reads PSPTGMFHVGG. Cysteine 100, cysteine 102, cysteine 122, and aspartate 124 together coordinate Zn(2+). The 'KMSKS' region motif lies at 232 to 236; it reads KLSKR. Lysine 235 lines the ATP pocket.

It belongs to the class-I aminoacyl-tRNA synthetase family. Glutamate--tRNA ligase type 1 subfamily. Monomer. Zn(2+) is required as a cofactor.

It localises to the cytoplasm. The enzyme catalyses tRNA(Glu) + L-glutamate + ATP = L-glutamyl-tRNA(Glu) + AMP + diphosphate. Functionally, catalyzes the attachment of glutamate to tRNA(Glu) in a two-step reaction: glutamate is first activated by ATP to form Glu-AMP and then transferred to the acceptor end of tRNA(Glu). This is Glutamate--tRNA ligase from Salinispora arenicola (strain CNS-205).